Here is a 638-residue protein sequence, read N- to C-terminus: Paramyosin (638 aa).

Residues 1 to 638 (FSPSTTRLES…EGDISVMQAD (638 aa)) are a coiled coil.

This sequence belongs to the paramyosin family. In terms of assembly, homodimer.

The protein localises to the cytoplasm. Its subcellular location is the myofibril. In terms of biological role, paramyosin is a major structural component of many thick filaments isolated from invertebrate muscles. This chain is Paramyosin, found in Opisthorchis felineus.